The primary structure comprises 70 residues: UPF0352 protein Sden_2336 (70 aa).

The protein belongs to the UPF0352 family.

The polypeptide is UPF0352 protein Sden_2336 (Shewanella denitrificans (strain OS217 / ATCC BAA-1090 / DSM 15013)).